Consider the following 386-residue polypeptide: Patatin-04/09 (386 aa).

An N-terminal signal peptide occupies residues 1-23 (MATTKSFLILFFMILATTSSTCA). The PNPLA domain occupies 32-229 (LSIDGGGIKG…TVGDPALLSL (198 aa)). A GXGXXG motif is present at residues 36–41 (GGGIKG). Positions 75–79 (GTSTG) match the GXSXG motif. Ser-77 (nucleophile) is an active-site residue. An N-linked (GlcNAc...) asparagine glycan is attached at Asn-115. The active-site Proton acceptor is the Asp-215. Residues 215–217 (DGG) carry the DGA/G motif. A coiled-coil region spans residues 321 to 384 (ENALNGTTTE…DRKKLRANKA (64 aa)). The N-linked (GlcNAc...) asparagine glycan is linked to Asn-325.

Belongs to the patatin family. Tuber.

It localises to the vacuole. Functionally, probable lipolytic acyl hydrolase (LAH), an activity which is thought to be involved in the response of tubers to pathogens. The chain is Patatin-04/09 from Solanum tuberosum (Potato).